Here is a 467-residue protein sequence, read N- to C-terminus: MPDIHIKNTRIYYNNSLRPAEILIENGKITKIGKDFRVSSSDMVIDAEGALTLPAGIDVHVHFREPGMTLKENWYTGSCAAAAGGIATVIDQPNTIPPTTDRRSFEQKLKLARKKSIVDFGINGGVTGNIEKLRELWRLGVTAFGEIFMAESTGGLNINEETFEEALAEIKKLGALATIHAEDEKMRLELEQLLKGDVSYDYHSKVRPNACEASAVQSALELISRLQVRAHFCHLSTLEAVGMIRKEKYLAKRENKKPLFTCEVTPHHLFLSAKDWERLRAFGKMNPPLRGSHSIKALVNGLNDGTIDMVASDHAPHLESEKDLDIRAAPSGVPGVETLMPLMLAAVRKNILPLSQMIMVTSWNPAKAFGLDRLGKGWLEVGFDADLMIVDPRNLQPIRADMLHSKAGWTPFEGMDAVFPEYTLSRGEVIWMEDSINAKPGRGEFLEGSGKRSEEDEEENSEETGSD.

Positions 60 and 62 each coordinate Zn(2+). Residues 62–64 (HFR) and Asn94 each bind substrate. Zn(2+) contacts are provided by Glu146, His180, His234, and Asp313. Residue Asp313 is part of the active site. His317 serves as a coordination point for substrate. Positions 439–467 (KPGRGEFLEGSGKRSEEDEEENSEETGSD) are disordered. Over residues 441 to 454 (GRGEFLEGSGKRSE) the composition is skewed to basic and acidic residues. A compositionally biased stretch (acidic residues) spans 455 to 467 (EDEEENSEETGSD).

This sequence belongs to the metallo-dependent hydrolases superfamily. DHOase family. Class I DHOase subfamily. The cofactor is Zn(2+).

It carries out the reaction (S)-dihydroorotate + H2O = N-carbamoyl-L-aspartate + H(+). It participates in pyrimidine metabolism; UMP biosynthesis via de novo pathway; (S)-dihydroorotate from bicarbonate: step 3/3. Functionally, catalyzes the reversible cyclization of carbamoyl aspartate to dihydroorotate. The sequence is that of Dihydroorotase from Methanosarcina acetivorans (strain ATCC 35395 / DSM 2834 / JCM 12185 / C2A).